An 84-amino-acid polypeptide reads, in one-letter code: Transcription elongation factor 1 homolog (84 aa).

Zn(2+)-binding residues include Cys26, Cys29, Cys50, and Cys53.

Belongs to the ELOF1 family.

Its subcellular location is the nucleus. Its function is as follows. Transcription elongation factor implicated in the maintenance of proper chromatin structure in actively transcribed regions. This Caenorhabditis elegans protein is Transcription elongation factor 1 homolog.